We begin with the raw amino-acid sequence, 152 residues long: SsrA-binding protein (152 aa).

Over residues 129 to 140 the composition is skewed to basic and acidic residues; it reads KREDMKKKDSQR. The segment at 129–152 is disordered; sequence KREDMKKKDSQRELSQALKSKNRE. Over residues 141-152 the composition is skewed to polar residues; that stretch reads ELSQALKSKNRE.

This sequence belongs to the SmpB family.

It is found in the cytoplasm. In terms of biological role, required for rescue of stalled ribosomes mediated by trans-translation. Binds to transfer-messenger RNA (tmRNA), required for stable association of tmRNA with ribosomes. tmRNA and SmpB together mimic tRNA shape, replacing the anticodon stem-loop with SmpB. tmRNA is encoded by the ssrA gene; the 2 termini fold to resemble tRNA(Ala) and it encodes a 'tag peptide', a short internal open reading frame. During trans-translation Ala-aminoacylated tmRNA acts like a tRNA, entering the A-site of stalled ribosomes, displacing the stalled mRNA. The ribosome then switches to translate the ORF on the tmRNA; the nascent peptide is terminated with the 'tag peptide' encoded by the tmRNA and targeted for degradation. The ribosome is freed to recommence translation, which seems to be the essential function of trans-translation. In Pelobacter propionicus (strain DSM 2379 / NBRC 103807 / OttBd1), this protein is SsrA-binding protein.